Consider the following 360-residue polypeptide: Phospho-N-acetylmuramoyl-pentapeptide-transferase (360 aa).

A run of 10 helical transmembrane segments spans residues 21 to 41 (YLTL…FIVG), 70 to 90 (GTPT…TLLW), 97 to 117 (YVWA…VDDY), 134 to 154 (YLWQ…TASS), 168 to 188 (VVLN…VGSS), 199 to 219 (GLAI…AYAS), 236 to 256 (AGEL…FLWF), 263 to 283 (VFMG…VAVL), 288 to 308 (IVLM…MLQV), and 338 to 358 (VIVR…ATLK).

It belongs to the glycosyltransferase 4 family. MraY subfamily. It depends on Mg(2+) as a cofactor.

The protein localises to the cell inner membrane. It carries out the reaction UDP-N-acetyl-alpha-D-muramoyl-L-alanyl-gamma-D-glutamyl-meso-2,6-diaminopimeloyl-D-alanyl-D-alanine + di-trans,octa-cis-undecaprenyl phosphate = di-trans,octa-cis-undecaprenyl diphospho-N-acetyl-alpha-D-muramoyl-L-alanyl-D-glutamyl-meso-2,6-diaminopimeloyl-D-alanyl-D-alanine + UMP. Its pathway is cell wall biogenesis; peptidoglycan biosynthesis. In terms of biological role, catalyzes the initial step of the lipid cycle reactions in the biosynthesis of the cell wall peptidoglycan: transfers peptidoglycan precursor phospho-MurNAc-pentapeptide from UDP-MurNAc-pentapeptide onto the lipid carrier undecaprenyl phosphate, yielding undecaprenyl-pyrophosphoryl-MurNAc-pentapeptide, known as lipid I. In Methylococcus capsulatus (strain ATCC 33009 / NCIMB 11132 / Bath), this protein is Phospho-N-acetylmuramoyl-pentapeptide-transferase.